The sequence spans 193 residues: Flagellar transcriptional regulator FlhC (193 aa).

Zn(2+) contacts are provided by Cys138, Cys141, Cys158, and Cys161.

It belongs to the FlhC family. Heterohexamer composed of two FlhC and four FlhD subunits. Each FlhC binds a FlhD dimer, forming a heterotrimer, and a hexamer assembles by dimerization of two heterotrimers. Zn(2+) is required as a cofactor.

The protein localises to the cytoplasm. Functions in complex with FlhD as a master transcriptional regulator that regulates transcription of several flagellar and non-flagellar operons by binding to their promoter region. Activates expression of class 2 flagellar genes, including fliA, which is a flagellum-specific sigma factor that turns on the class 3 genes. Also regulates genes whose products function in a variety of physiological pathways. In Yersinia enterocolitica, this protein is Flagellar transcriptional regulator FlhC.